We begin with the raw amino-acid sequence, 263 residues long: Acyl-[acyl-carrier-protein]--UDP-N-acetylglucosamine O-acyltransferase (263 aa).

The protein belongs to the transferase hexapeptide repeat family. LpxA subfamily. In terms of assembly, homotrimer.

The protein resides in the cytoplasm. It carries out the reaction a (3R)-hydroxyacyl-[ACP] + UDP-N-acetyl-alpha-D-glucosamine = a UDP-3-O-[(3R)-3-hydroxyacyl]-N-acetyl-alpha-D-glucosamine + holo-[ACP]. The protein operates within glycolipid biosynthesis; lipid IV(A) biosynthesis; lipid IV(A) from (3R)-3-hydroxytetradecanoyl-[acyl-carrier-protein] and UDP-N-acetyl-alpha-D-glucosamine: step 1/6. Its function is as follows. Involved in the biosynthesis of lipid A, a phosphorylated glycolipid that anchors the lipopolysaccharide to the outer membrane of the cell. The sequence is that of Acyl-[acyl-carrier-protein]--UDP-N-acetylglucosamine O-acyltransferase from Campylobacter lari (strain RM2100 / D67 / ATCC BAA-1060).